A 183-amino-acid polypeptide reads, in one-letter code: Capsid protein (183 aa).

Residues 136–183 (NAPILSTLPETTVVRRRGRSPRRRTPSPRRRRSQSPRRRRSQSPASQC) are disordered. Basic residues predominate over residues 149-176 (VRRRGRSPRRRTPSPRRRRSQSPRRRRS). Residues Ser155, Ser162, and Ser170 each carry the phosphoserine; by host modification. The stretch at 155 to 161 (SPRRRTP) is one 1; half-length repeat. The segment at 155–177 (SPRRRTPSPRRRRSQSPRRRRSQ) is 3 X 8 AA repeats of S-P-R-R-R-[PR]-S-Q. The Bipartite nuclear localization signal signature appears at 158-175 (RRTPSPRRRRSQSPRRRR). 2 repeat units span residues 162-169 (SPRRRRSQ) and 170-177 (SPRRRRSQ). The tract at residues 177–183 (QSPASQC) is RNA binding.

Belongs to the orthohepadnavirus core antigen family. Homodimerizes, then multimerizes. Interacts with cytosol exposed regions of viral L glycoprotein present in the reticulum-to-Golgi compartment. Interacts with human FLNB. Phosphorylated form interacts with host importin alpha; this interaction depends on the exposure of the NLS, which itself depends upon genome maturation and/or phosphorylation of the capsid protein. Interacts with host NUP153. Post-translationally, phosphorylated by host SRPK1, SRPK2, and maybe protein kinase C or GAPDH. Phosphorylation is critical for pregenomic RNA packaging. Protein kinase C phosphorylation is stimulated by HBx protein and may play a role in transport of the viral genome to the nucleus at the late step during the viral replication cycle.

The protein localises to the virion. It is found in the host cytoplasm. Functionally, self assembles to form an icosahedral capsid. Most capsids appear to be large particles with an icosahedral symmetry of T=4 and consist of 240 copies of capsid protein, though a fraction forms smaller T=3 particles consisting of 180 capsid proteins. Entering capsids are transported along microtubules to the nucleus. Phosphorylation of the capsid is thought to induce exposure of nuclear localization signal in the C-terminal portion of the capsid protein that allows binding to the nuclear pore complex via the importin (karyopherin-) alpha and beta. Capsids are imported in intact form through the nuclear pore into the nuclear basket, where it probably binds NUP153. Only capsids that contain the mature viral genome can release the viral DNA and capsid protein into the nucleoplasm. Immature capsids get stuck in the basket. Capsids encapsulate the pre-genomic RNA and the P protein. Pre-genomic RNA is reverse-transcribed into DNA while the capsid is still in the cytoplasm. The capsid can then either be directed to the nucleus, providing more genomes for transcription, or bud through the endoplasmic reticulum to provide new virions. In Hylobatidae (gibbons), this protein is Capsid protein.